Consider the following 164-residue polypeptide: Peptidyl-prolyl cis-trans isomerase A-like 4F (164 aa).

The PPIase cyclophilin-type domain occupies phenylalanine 7 to glutamine 163.

This sequence belongs to the cyclophilin-type PPIase family. PPIase A subfamily.

It is found in the cytoplasm. The catalysed reaction is [protein]-peptidylproline (omega=180) = [protein]-peptidylproline (omega=0). In terms of biological role, PPIases accelerate the folding of proteins. It catalyzes the cis-trans isomerization of proline imidic peptide bonds in oligopeptides. The protein is Peptidyl-prolyl cis-trans isomerase A-like 4F of Homo sapiens (Human).